We begin with the raw amino-acid sequence, 273 residues long: Large ribosomal subunit protein uL2 (273 aa).

Disordered regions lie at residues 28-54 (KPYA…TRHI) and 221-273 (RGTA…RRTK). Over residues 39 to 48 (KSGGRNNNGR) the composition is skewed to low complexity.

It belongs to the universal ribosomal protein uL2 family. Part of the 50S ribosomal subunit. Forms a bridge to the 30S subunit in the 70S ribosome.

Its function is as follows. One of the primary rRNA binding proteins. Required for association of the 30S and 50S subunits to form the 70S ribosome, for tRNA binding and peptide bond formation. It has been suggested to have peptidyltransferase activity; this is somewhat controversial. Makes several contacts with the 16S rRNA in the 70S ribosome. This Pectobacterium carotovorum subsp. carotovorum (strain PC1) protein is Large ribosomal subunit protein uL2.